Reading from the N-terminus, the 603-residue chain is Alpha-1,2-mannosyltransferase algn-9 (603 aa).

The tract at residues 1 to 25 (MVTHRRKGGSGPPQKPPPRIVDRSS) is disordered. Topologically, residues 1–108 (MVTHRRKGGS…EYSPVYAIRS (108 aa)) are lumenal. The chain crosses the membrane as a helical span at residues 109-129 (YFYIYLHYIPASLFANLFGDT). Position 130 (Lys130) is a topological domain, cytoplasmic. A helical transmembrane segment spans residues 131–151 (IVVFTLIRLTIGLFCLLGEYY). Residues 152–166 (AFDAICKKINIATGR) lie on the Lumenal side of the membrane. A helical transmembrane segment spans residues 167–187 (FFILFSIFSSGMFLASTAFVP). Residues 188–195 (SSFCMAIT) are Cytoplasmic-facing. The chain crosses the membrane as a helical span at residues 196-216 (FYILGAYLNENWTAGIFCVAF). Residues 217–218 (ST) are Lumenal-facing. Residues 219–239 (MVGWPFSAVLGLPIVADMLLL) traverse the membrane as a helical segment. Residues 240-245 (KGLRIR) are Cytoplasmic-facing. Residues 246–266 (FILTSLVIGLCIGGVQVITDS) traverse the membrane as a helical segment. Over 267–310 (HYFGKTVLAPLNIFLYNVVSGPGPSLYGEEPLSFYIKNLFNNWN) the chain is Lumenal. Residues 311–331 (IVIFAAPFGFPLSLAYFTKVW) form a helical membrane-spanning segment. The Cytoplasmic portion of the chain corresponds to 332-343 (MSQDRNVALYQR). A helical transmembrane segment spans residues 344 to 364 (FAPIILLAVTTAAWLLIFGSQ). Topologically, residues 365-370 (AHKEER) are lumenal. A helical membrane pass occupies residues 371 to 391 (FLFPIYPFIAFFAALALDATN). Residues 392–397 (RLCLKK) lie on the Cytoplasmic side of the membrane. A helical transmembrane segment spans residues 398 to 418 (LGMDNILSILFILCFAILSAS). Topologically, residues 419-603 (RTYSIHNNYG…TCTLYRKSNL (185 aa)) are lumenal. An N-linked (GlcNAc...) asparagine glycan is attached at Asn443.

This sequence belongs to the glycosyltransferase 22 family.

It is found in the endoplasmic reticulum membrane. The enzyme catalyses an alpha-D-Man-(1-&gt;2)-alpha-D-Man-(1-&gt;2)-alpha-D-Man-(1-&gt;3)-[alpha-D-Man-(1-&gt;3)-alpha-D-Man-(1-&gt;6)]-beta-D-Man-(1-&gt;4)-beta-D-GlcNAc-(1-&gt;4)-alpha-D-GlcNAc-diphospho-di-trans,poly-cis-dolichol + a di-trans,poly-cis-dolichyl beta-D-mannosyl phosphate = an alpha-D-Man-(1-&gt;2)-alpha-D-Man-(1-&gt;2)-alpha-D-Man-(1-&gt;3)-[alpha-D-Man-(1-&gt;2)-alpha-D-Man-(1-&gt;3)-alpha-D-Man-(1-&gt;6)]-beta-D-Man-(1-&gt;4)-beta-D-GlcNAc-(1-&gt;4)-alpha-D-GlcNAc-diphospho-di-trans,poly-cis-dolichol + a di-trans,poly-cis-dolichyl phosphate + H(+). It carries out the reaction an alpha-D-Man-(1-&gt;2)-alpha-D-Man-(1-&gt;2)-alpha-D-Man-(1-&gt;3)-[alpha-D-Man-(1-&gt;2)-alpha-D-Man-(1-&gt;3)-[alpha-D-Man-(1-&gt;6)]-alpha-D-Man-(1-&gt;6)]-beta-D-Man-(1-&gt;4)-beta-D-GlcNAc-(1-&gt;4)-alpha-D-GlcNAc-diphospho-di-trans,poly-cis-dolichol + a di-trans,poly-cis-dolichyl beta-D-mannosyl phosphate = an alpha-D-Man-(1-&gt;2)-alpha-D-Man-(1-&gt;2)-alpha-D-Man-(1-&gt;3)-[alpha-D-Man-(1-&gt;2)-alpha-D-Man-(1-&gt;3)-[alpha-D-Man-(1-&gt;2)-alpha-D-Man-(1-&gt;6)]-alpha-D-Man-(1-&gt;6)]-beta-D-Man-(1-&gt;4)-beta-D-GlcNAc-(1-&gt;4)-alpha-D-GlcNAc-diphospho-di-trans,poly-cis-dolichol + a di-trans,poly-cis-dolichyl phosphate + H(+). The protein operates within protein modification; protein glycosylation. Catalyzes the transfer of mannose from Dol-P-Man to lipid-linked oligosaccharides. The polypeptide is Alpha-1,2-mannosyltransferase algn-9 (Caenorhabditis elegans).